A 426-amino-acid chain; its full sequence is Nucleolar protein 12 (426 aa).

The interval 26–128 (QSSGPVDTLE…SKRASRPDMK (103 aa)) is disordered. Positions 87 to 105 (LEEKYMQQVLKEDSDHESE) are enriched in basic and acidic residues. RRM domains lie at 137-251 (RTVF…SVAH) and 259-339 (RSVF…RCRN). The span at 401–415 (KARSKTGRVTKRSQA) shows a compositional bias: basic residues. A disordered region spans residues 401-426 (KARSKTGRVTKRSQAFKKAEANKKQK). Basic and acidic residues predominate over residues 417–426 (KKAEANKKQK).

This sequence belongs to the RRM RBM34 family.

It is found in the nucleus. The protein resides in the nucleolus. Functionally, involved in pre-25S rRNA processing. In Eremothecium gossypii (strain ATCC 10895 / CBS 109.51 / FGSC 9923 / NRRL Y-1056) (Yeast), this protein is Nucleolar protein 12 (NOP12).